The following is a 426-amino-acid chain: Glutamyl-tRNA reductase (426 aa).

Residues 49-52 (TCNR), S109, 114-116 (EGQ), and Q120 contribute to the substrate site. The Nucleophile role is filled by C50. 189 to 194 (GAGETG) is an NADP(+) binding site.

Belongs to the glutamyl-tRNA reductase family. Homodimer.

The enzyme catalyses (S)-4-amino-5-oxopentanoate + tRNA(Glu) + NADP(+) = L-glutamyl-tRNA(Glu) + NADPH + H(+). The protein operates within porphyrin-containing compound metabolism; protoporphyrin-IX biosynthesis; 5-aminolevulinate from L-glutamyl-tRNA(Glu): step 1/2. It functions in the pathway porphyrin-containing compound metabolism; chlorophyll biosynthesis. In terms of biological role, catalyzes the NADPH-dependent reduction of glutamyl-tRNA(Glu) to glutamate 1-semialdehyde (GSA). This Chlorobium phaeobacteroides (strain BS1) protein is Glutamyl-tRNA reductase.